Here is a 226-residue protein sequence, read N- to C-terminus: UPF0758 protein SPJ_1027 (226 aa).

The region spanning 103–225 is the MPN domain; the sequence is SILSSQKLAK…YFSYREKTDL (123 aa). His-174, His-176, and Asp-187 together coordinate Zn(2+). The JAMM motif signature appears at 174-187; that stretch reads HNHPSGAVAPSQND.

This sequence belongs to the UPF0758 family.

This chain is UPF0758 protein SPJ_1027, found in Streptococcus pneumoniae (strain JJA).